The primary structure comprises 93 residues: UPF0147 protein PF0239 (93 aa).

It belongs to the UPF0147 family.

This is UPF0147 protein PF0239 from Pyrococcus furiosus (strain ATCC 43587 / DSM 3638 / JCM 8422 / Vc1).